The chain runs to 523 residues: NAD(P)H-quinone oxidoreductase subunit 2 (523 aa).

Helical transmembrane passes span 29-49, 57-77, 94-114, 132-152, 182-202, 221-241, 255-275, 291-311, 317-337, 345-365, 389-409, 424-444, and 477-497; these read AVLPEGAVLLAMIATLLVDLA, WVPPICYIGLGSALVLLALQW, LAVAFRAVIATSTLLSLLISW, LAATLGAMLLCGATDLVSIFI, LLVGSAAAAVFLYGASLLYGL, PIAALSLVFVLATVAFKIAAV, PTPVVAFLSVGSKAAGFALAL, LLFTVLAVLSMTLGNVVALAQ, MLAYSSIGQAGFVMIGMVCGT, VLYMAAYLFMNLGAFACIILF, LGLSLCLLSLGGIPPMLGFFG, LLVVVGLITSVISIYYYISVI, and VALIGCVGVTAIGGILSNPLF.

This sequence belongs to the complex I subunit 2 family. NDH-1 can be composed of about 15 different subunits; different subcomplexes with different compositions have been identified which probably have different functions.

It localises to the cellular thylakoid membrane. It catalyses the reaction a plastoquinone + NADH + (n+1) H(+)(in) = a plastoquinol + NAD(+) + n H(+)(out). The catalysed reaction is a plastoquinone + NADPH + (n+1) H(+)(in) = a plastoquinol + NADP(+) + n H(+)(out). In terms of biological role, NDH-1 shuttles electrons from an unknown electron donor, via FMN and iron-sulfur (Fe-S) centers, to quinones in the respiratory and/or the photosynthetic chain. The immediate electron acceptor for the enzyme in this species is believed to be plastoquinone. Couples the redox reaction to proton translocation, and thus conserves the redox energy in a proton gradient. Cyanobacterial NDH-1 also plays a role in inorganic carbon-concentration. The polypeptide is NAD(P)H-quinone oxidoreductase subunit 2 (Synechococcus sp. (strain CC9902)).